Consider the following 661-residue polypeptide: Ubiquitin carboxyl-terminal hydrolase 25 (661 aa).

A USP domain is found at 24 to 335 (LGLRNLGNTC…KAYILFFSRS (312 aa)). C33 (nucleophile) is an active-site residue. H294 (proton acceptor) is an active-site residue. Disordered regions lie at residues 387 to 406 (GNLASSKPHKFIRPKPRAEQ) and 449 to 558 (FHQD…LCSS). The span at 449-461 (FHQDENIAPKANK) shows a compositional bias: basic and acidic residues. 2 stretches are compositionally biased toward polar residues: residues 462-475 (ENSVSVLPTKVNSG) and 545-558 (NGVSTTQSKGLCSS).

Belongs to the peptidase C19 family.

It catalyses the reaction Thiol-dependent hydrolysis of ester, thioester, amide, peptide and isopeptide bonds formed by the C-terminal Gly of ubiquitin (a 76-residue protein attached to proteins as an intracellular targeting signal).. Its function is as follows. Recognizes and hydrolyzes the peptide bond at the C-terminal Gly of ubiquitin. Involved in the processing of poly-ubiquitin precursors as well as that of ubiquitinated proteins. The chain is Ubiquitin carboxyl-terminal hydrolase 25 (UBP25) from Arabidopsis thaliana (Mouse-ear cress).